The sequence spans 107 residues: UPF0060 membrane protein Sala_0701 (107 aa).

A run of 4 helical transmembrane segments spans residues 4-24 (FAYI…WAWL), 30-50 (VWWV…LTLV), 60-80 (AAYG…VEGA), and 87-107 (LIGA…PRGG).

This sequence belongs to the UPF0060 family.

The protein localises to the cell inner membrane. The polypeptide is UPF0060 membrane protein Sala_0701 (Sphingopyxis alaskensis (strain DSM 13593 / LMG 18877 / RB2256) (Sphingomonas alaskensis)).